Here is a 224-residue protein sequence, read N- to C-terminus: Large ribosomal subunit protein uL16z (224 aa).

This sequence belongs to the universal ribosomal protein uL16 family. Component of the small ribosomal subunit. Mature ribosomes consist of a small (40S) and a large (60S) subunit. The 40S subunit contains about 33 different proteins and 1 molecule of RNA (18S). The 60S subunit contains about 49 different proteins and 3 molecules of RNA (25S, 5.8S and 5S).

This Oryza sativa subsp. indica (Rice) protein is Large ribosomal subunit protein uL16z (SC34).